We begin with the raw amino-acid sequence, 245 residues long: Uridylate kinase (245 aa).

K15–G18 is an ATP binding site. Residues G23–G28 form an involved in allosteric activation by GTP region. G57 serves as a coordination point for UMP. G58 and R62 together coordinate ATP. UMP contacts are provided by residues D77 and T138–T145. 3 residues coordinate ATP: T165, Y171, and D174.

The protein belongs to the UMP kinase family. In terms of assembly, homohexamer.

Its subcellular location is the cytoplasm. It catalyses the reaction UMP + ATP = UDP + ADP. Its pathway is pyrimidine metabolism; CTP biosynthesis via de novo pathway; UDP from UMP (UMPK route): step 1/1. Its activity is regulated as follows. Allosterically activated by GTP. Inhibited by UTP. Its function is as follows. Catalyzes the reversible phosphorylation of UMP to UDP. In Shewanella sp. (strain W3-18-1), this protein is Uridylate kinase.